The following is a 160-amino-acid chain: Nucleotide-binding protein BP2916 (160 aa).

Belongs to the YajQ family.

Nucleotide-binding protein. In Bordetella pertussis (strain Tohama I / ATCC BAA-589 / NCTC 13251), this protein is Nucleotide-binding protein BP2916.